We begin with the raw amino-acid sequence, 133 residues long: Large ribosomal subunit protein bL20 (133 aa).

This sequence belongs to the bacterial ribosomal protein bL20 family.

In terms of biological role, binds directly to 23S ribosomal RNA and is necessary for the in vitro assembly process of the 50S ribosomal subunit. It is not involved in the protein synthesizing functions of that subunit. This Bartonella bacilliformis (strain ATCC 35685 / KC583 / Herrer 020/F12,63) protein is Large ribosomal subunit protein bL20.